A 427-amino-acid chain; its full sequence is Peptidase B (427 aa).

2 residues coordinate Mn(2+): Lys195 and Asp200. The active site involves Lys207. Positions 218, 277, and 279 each coordinate Mn(2+). Arg281 is a catalytic residue.

This sequence belongs to the peptidase M17 family. As to quaternary structure, homohexamer. Mn(2+) serves as cofactor.

The protein localises to the cytoplasm. The catalysed reaction is Release of an N-terminal amino acid, Xaa, from a peptide or arylamide. Xaa is preferably Glu or Asp but may be other amino acids, including Leu, Met, His, Cys and Gln.. In terms of biological role, probably plays an important role in intracellular peptide degradation. This chain is Peptidase B, found in Escherichia coli O139:H28 (strain E24377A / ETEC).